The sequence spans 1061 residues: DNA polymerase (1061 aa).

The disordered stretch occupies residues 773–792; it reads NSEAEESDEDQGPAPFYSPP.

It belongs to the DNA polymerase type-B family. Heterodimer with the terminal protein; this heterodimer binds to bp 9 to 18 of the genome. Forms a complex with viral pTP, DBP and hosts NFIA and POU2F1/OCT1 for initiation of replication.

The protein resides in the host nucleus. The enzyme catalyses DNA(n) + a 2'-deoxyribonucleoside 5'-triphosphate = DNA(n+1) + diphosphate. Functionally, eukaryotic-type DNA polymerase involved in viral genomic replication. DNA synthesis is protein primed, and acts in a strand displacement replication. Assembles in complex with viral pTP, DBP, host NFIA and host POU2F1/OCT1 on viral origin of replication. The polymerase covalently transfers dCMP onto pTP, thereby initiating complementary strand synthesis. This is DNA polymerase from Human adenovirus A serotype 12 (HAdV-12).